The sequence spans 265 residues: MSYKAQYTPGETQIAENRRKHMDPDYEFRKLREVSDEDLVKVLGHRNPGESYKSVHPPLDEMDFEEDIVRDMVEPIQGAKEGVRVRYIQFADSMYNAPAQPYDRARTYMWRYRGVDTGTLSGRQVIEMRELDLEGVSKELVETELFDPATTGIRGATVHGHSLRLDENGLMFDALQRYVFDEEKGHVVYVKDQVGRPLDEPVDMGQPLGEDELKKITTIYRKDNIAMRDDKEAIEVVENIHTGRTLGGFGMDVFKDDLRKRLGDD.

A coenzyme M-binding site is contributed by arginine 123.

This sequence belongs to the methyl-coenzyme M reductase gamma subunit family. In terms of assembly, MCR is a hexamer of two alpha, two beta, and two gamma chains, forming a dimer of heterotrimers. Requires coenzyme F430 as cofactor.

The enzyme catalyses coenzyme B + methyl-coenzyme M = methane + coenzyme M-coenzyme B heterodisulfide. It functions in the pathway one-carbon metabolism; methyl-coenzyme M reduction; methane from methyl-coenzyme M: step 1/1. Component of the methyl-coenzyme M reductase (MCR) I that catalyzes the reductive cleavage of methyl-coenzyme M (CoM-S-CH3 or 2-(methylthio)ethanesulfonate) using coenzyme B (CoB or 7-mercaptoheptanoylthreonine phosphate) as reductant which results in the production of methane and the mixed heterodisulfide of CoB and CoM (CoM-S-S-CoB). This is the final step in methanogenesis. The sequence is that of Methyl-coenzyme M reductase II subunit gamma (mrtG) from Methanothermobacter marburgensis (strain ATCC BAA-927 / DSM 2133 / JCM 14651 / NBRC 100331 / OCM 82 / Marburg) (Methanobacterium thermoautotrophicum).